The following is a 403-amino-acid chain: Tryptophan synthase beta chain (403 aa).

K88 carries the N6-(pyridoxal phosphate)lysine modification.

Belongs to the TrpB family. Tetramer of two alpha and two beta chains. It depends on pyridoxal 5'-phosphate as a cofactor.

It carries out the reaction (1S,2R)-1-C-(indol-3-yl)glycerol 3-phosphate + L-serine = D-glyceraldehyde 3-phosphate + L-tryptophan + H2O. It participates in amino-acid biosynthesis; L-tryptophan biosynthesis; L-tryptophan from chorismate: step 5/5. Its function is as follows. The beta subunit is responsible for the synthesis of L-tryptophan from indole and L-serine. This is Tryptophan synthase beta chain from Shewanella frigidimarina (strain NCIMB 400).